The following is a 395-amino-acid chain: MANDYLFTSESVSEGHPDKVADQISDAILDAILEQDKYSRVAAETLCNTGLVVLAGEITTTANIDYIQIARDTIKRIGYDNTDYGIDYKGCAVLVAYDKQSPDIAQGVDRAHDDNLDQGAGDQGLMFGYACDETPELMPLPIYLSHRLVERQASLRRDGRLPWLRPDAKSQVTVRYVDGRPDSIDTVVLSTQHAPDIELPALREAVIEEIIKPTLPADLIKGDIKFLVNPTGRFVIGGPQGDCGLTGRKIIVDTYGGAAPHGGGAFSGKDPSKVDRSAAYAGRYVAKNIVAAGLASRALIQVSYAIGVAEPTSVMVNTFGTGRVSDAVITKLVREHFDLRPKGIIKMLDLLRPIYEKTAAYGHFGREEPEFSWEATDKALVLAEAAGVEPTARVA.

His16 lines the ATP pocket. Asp18 serves as a coordination point for Mg(2+). Glu44 serves as a coordination point for K(+). L-methionine is bound by residues Glu57 and Gln100. Residues 100 to 110 (QSPDIAQGVDR) are flexible loop. ATP-binding positions include 167–169 (DAK), 233–234 (RF), Asp242, 248–249 (RK), Ala265, and Lys269. Asp242 contributes to the L-methionine binding site. Position 273 (Lys273) interacts with L-methionine.

This sequence belongs to the AdoMet synthase family. Homotetramer; dimer of dimers. The cofactor is Mg(2+). It depends on K(+) as a cofactor.

It localises to the cytoplasm. It catalyses the reaction L-methionine + ATP + H2O = S-adenosyl-L-methionine + phosphate + diphosphate. The protein operates within amino-acid biosynthesis; S-adenosyl-L-methionine biosynthesis; S-adenosyl-L-methionine from L-methionine: step 1/1. Functionally, catalyzes the formation of S-adenosylmethionine (AdoMet) from methionine and ATP. The overall synthetic reaction is composed of two sequential steps, AdoMet formation and the subsequent tripolyphosphate hydrolysis which occurs prior to release of AdoMet from the enzyme. This Burkholderia ambifaria (strain MC40-6) protein is S-adenosylmethionine synthase.